We begin with the raw amino-acid sequence, 277 residues long: Undecaprenyl-diphosphatase (277 aa).

8 helical membrane passes run 1–21 (MDIIQAIIIGIVQGLTEFLPV), 38–58 (SSLAFDVFLHLGSLIAVLWFF), 93–113 (LVWYVIIATIPVGLVGVLFES), 118–138 (LFAGALYVPAFFLFVTGTILY), 168–188 (AILPGLSRSGTTIAAGLVIGL), 191–211 (EFAAKFSFILSIPAILGAFVV), 222–242 (FNALAILFGFLAALISGYLAI), and 256–276 (IFAYYCWIVGIIVFMGSITHL).

It belongs to the UppP family.

The protein resides in the cell membrane. It catalyses the reaction di-trans,octa-cis-undecaprenyl diphosphate + H2O = di-trans,octa-cis-undecaprenyl phosphate + phosphate + H(+). Its function is as follows. Catalyzes the dephosphorylation of undecaprenyl diphosphate (UPP). The polypeptide is Undecaprenyl-diphosphatase (Methanobrevibacter smithii (strain ATCC 35061 / DSM 861 / OCM 144 / PS)).